The chain runs to 206 residues: Thymidylate kinase (206 aa).

14–21 (GGEGIGKS) is an ATP binding site.

The protein belongs to the thymidylate kinase family.

The catalysed reaction is dTMP + ATP = dTDP + ADP. Functionally, phosphorylation of dTMP to form dTDP in both de novo and salvage pathways of dTTP synthesis. The polypeptide is Thymidylate kinase (Rickettsia bellii (strain OSU 85-389)).